Reading from the N-terminus, the 190-residue chain is RNA pyrophosphohydrolase (190 aa).

The 144-residue stretch at 6–149 (GYRPNVGIIL…KRDVYTQALN (144 aa)) folds into the Nudix hydrolase domain. Positions 38-59 (GGIKYGESPVQAMYRELHEEVG) match the Nudix box motif. Residues 167–190 (QRVHGPRSTDNPSSETDGHAHIAG) form a disordered region.

This sequence belongs to the Nudix hydrolase family. RppH subfamily. Requires a divalent metal cation as cofactor.

In terms of biological role, accelerates the degradation of transcripts by removing pyrophosphate from the 5'-end of triphosphorylated RNA, leading to a more labile monophosphorylated state that can stimulate subsequent ribonuclease cleavage. In Bordetella parapertussis (strain 12822 / ATCC BAA-587 / NCTC 13253), this protein is RNA pyrophosphohydrolase.